Reading from the N-terminus, the 152-residue chain is Deoxyuridine 5'-triphosphate nucleotidohydrolase (152 aa).

Substrate-binding positions include 71–73, Asn-84, 88–90, and Met-98; these read RSG and LID.

This sequence belongs to the dUTPase family. It depends on Mg(2+) as a cofactor.

The enzyme catalyses dUTP + H2O = dUMP + diphosphate + H(+). Its pathway is pyrimidine metabolism; dUMP biosynthesis; dUMP from dCTP (dUTP route): step 2/2. Functionally, this enzyme is involved in nucleotide metabolism: it produces dUMP, the immediate precursor of thymidine nucleotides and it decreases the intracellular concentration of dUTP so that uracil cannot be incorporated into DNA. The sequence is that of Deoxyuridine 5'-triphosphate nucleotidohydrolase from Aeromonas hydrophila subsp. hydrophila (strain ATCC 7966 / DSM 30187 / BCRC 13018 / CCUG 14551 / JCM 1027 / KCTC 2358 / NCIMB 9240 / NCTC 8049).